Here is a 956-residue protein sequence, read N- to C-terminus: Valine--tRNA ligase (956 aa).

Positions 69–79 (PNITGVLHMGH) match the 'HIGH' region motif. The 'KMSKS' region motif lies at 566-570 (KMSKS). Lysine 569 serves as a coordination point for ATP. Positions 885–911 (LCARLQKAWQKARQKVQQVERKLADAQ) form a coiled coil.

Belongs to the class-I aminoacyl-tRNA synthetase family. ValS type 1 subfamily. In terms of assembly, monomer.

The protein localises to the cytoplasm. The catalysed reaction is tRNA(Val) + L-valine + ATP = L-valyl-tRNA(Val) + AMP + diphosphate. Functionally, catalyzes the attachment of valine to tRNA(Val). As ValRS can inadvertently accommodate and process structurally similar amino acids such as threonine, to avoid such errors, it has a 'posttransfer' editing activity that hydrolyzes mischarged Thr-tRNA(Val) in a tRNA-dependent manner. This is Valine--tRNA ligase from Treponema pallidum (strain Nichols).